The chain runs to 255 residues: Arginine-binding extracellular protein ArtP (255 aa).

Residues 1–19 (MKKWLLLLVAACITFALTA) form the signal peptide. The N-palmitoyl cysteine moiety is linked to residue Cys-20. Cys-20 carries the S-diacylglycerol cysteine lipid modification.

It belongs to the bacterial solute-binding protein 3 family.

It is found in the cell membrane. Functionally, part of a binding-protein-dependent transport system for arginine. The polypeptide is Arginine-binding extracellular protein ArtP (artP) (Bacillus subtilis (strain 168)).